Consider the following 646-residue polypeptide: Epithelial sodium channel subunit beta-2 (646 aa).

Topologically, residues 1–57 (MIQGKLKRLKRYFTRALHRIQKGPGYTYKELLVWFCDNTNTHGPKRIIKEGPKKRVM) are cytoplasmic. A helical membrane pass occupies residues 58-78 (WFILTLVFAGLVFWQWGLLIL). Topologically, residues 79-551 (TYLSYGVSVS…GGQFGFWMGG (473 aa)) are extracellular. 8 disulfide bridges follow: C104–C290, C214–C221, C267–C274, C380–C467, C405–C463, C409–C459, C418–C445, and C420–C434. A helical membrane pass occupies residues 552–572 (SVLCIIEFGEIIIDCMWITIL). The Cytoplasmic portion of the chain corresponds to 573–646 (KLLAWIRNRR…IEPVSSDEEN (74 aa)). The tract at residues 586-646 (QRPQYADPPP…IEPVSSDEEN (61 aa)) is disordered. Residues 610 to 619 (QHDDGNHVTE) show a composition bias toward basic and acidic residues.

It belongs to the amiloride-sensitive sodium channel (TC 1.A.6) family. SCNN1B subfamily. Component of the heterotrimeric epithelial sodium channel (ENaC) composed of an alpha/SCNN1A, a beta/SCNN1B and a gamma/SCNN1G subunit.

The protein resides in the apical cell membrane. It is found in the cytoplasmic vesicle membrane. It carries out the reaction Na(+)(in) = Na(+)(out). Its activity is regulated as follows. Originally identified and characterized by its inhibition by the diuretic drug amiloride. Its function is as follows. This is one of the three pore-forming subunits of the heterotrimeric epithelial sodium channel (ENaC), a critical regulator of sodium balance and fluid homeostasis. ENaC operates in epithelial tissues, where it mediates the electrodiffusion of sodium ions from extracellular fluid through the apical membrane of cells, with water following osmotically. The protein is Epithelial sodium channel subunit beta-2 (scnn1b-b) of Xenopus laevis (African clawed frog).